The primary structure comprises 893 residues: DNA mismatch repair protein MutS (893 aa).

Residue 637 to 644 (GPNMGGKS) participates in ATP binding.

It belongs to the DNA mismatch repair MutS family.

Functionally, this protein is involved in the repair of mismatches in DNA. It is possible that it carries out the mismatch recognition step. This protein has a weak ATPase activity. The protein is DNA mismatch repair protein MutS of Burkholderia thailandensis (strain ATCC 700388 / DSM 13276 / CCUG 48851 / CIP 106301 / E264).